We begin with the raw amino-acid sequence, 455 residues long: Phosphoglucosamine mutase (455 aa).

Ser-108 (phosphoserine intermediate) is an active-site residue. The Mg(2+) site is built by Ser-108, Asp-246, Asp-248, and Asp-250. The residue at position 108 (Ser-108) is a Phosphoserine.

Belongs to the phosphohexose mutase family. It depends on Mg(2+) as a cofactor. Activated by phosphorylation.

It carries out the reaction alpha-D-glucosamine 1-phosphate = D-glucosamine 6-phosphate. Its function is as follows. Catalyzes the conversion of glucosamine-6-phosphate to glucosamine-1-phosphate. This Frankia alni (strain DSM 45986 / CECT 9034 / ACN14a) protein is Phosphoglucosamine mutase.